A 368-amino-acid polypeptide reads, in one-letter code: RNA polymerase sigma factor SigA (368 aa).

A disordered region spans residues 60–86; that stretch reads VVDENGDPSEHSLKKDEKEAEKAQAED. Residues 67–84 show a composition bias toward basic and acidic residues; the sequence is PSEHSLKKDEKEAEKAQA. Residues 135 to 205 form a sigma-70 factor domain-2 region; it reads LAEANLRLVV…TRAIADQART (71 aa). The Interaction with polymerase core subunit RpoC signature appears at 159-162; the sequence is DLIQ. The tract at residues 214 to 290 is sigma-70 factor domain-3; sequence ETINKLIRIQ…DQDATSPAEH (77 aa). The interval 303 to 356 is sigma-70 factor domain-4; sequence VLDTLTDREENVLRLRFGLDDGRTRTLEEVGKVFGVTRERIRQIEAKALRKLRH. Positions 329 to 348 form a DNA-binding region, H-T-H motif; sequence LEEVGKVFGVTRERIRQIEA.

The protein belongs to the sigma-70 factor family. RpoD/SigA subfamily. As to quaternary structure, interacts transiently with the RNA polymerase catalytic core.

The protein resides in the cytoplasm. Its function is as follows. Sigma factors are initiation factors that promote the attachment of RNA polymerase to specific initiation sites and are then released. This sigma factor is the primary sigma factor during exponential growth. The protein is RNA polymerase sigma factor SigA of Enterococcus faecalis (strain ATCC 700802 / V583).